Consider the following 49-residue polypeptide: Putative metallothionein MT1DP (49 aa).

Positions 1–29 (MDLSCSCATGGSCTCASSCKCKEYKCTSC) are beta. Cysteine 5, cysteine 7, cysteine 13, cysteine 15, cysteine 19, cysteine 21, cysteine 26, cysteine 29, cysteine 33, cysteine 34, cysteine 36, cysteine 37, cysteine 41, cysteine 44, and cysteine 48 together coordinate a divalent metal cation. Residues 30 to 49 (KKNCCSCCPMGCAKCAQGCT) are alpha.

It belongs to the metallothionein superfamily. Type 1 family.

Its function is as follows. Metallothioneins have a high content of cysteine residues that bind various heavy metals. The sequence is that of Putative metallothionein MT1DP (MT1DP) from Homo sapiens (Human).